Reading from the N-terminus, the 239-residue chain is Myogenic factor 6 (239 aa).

The disordered stretch occupies residues 28–64 (HLDMSGVSPLYNGNDSPLSPGQDNVPSETGGESSGDE). A compositionally biased stretch (polar residues) spans 38–58 (YNGNDSPLSPGQDNVPSETGG). One can recognise a bHLH domain in the interval 96 to 147 (DRRKAATLRERRRLKKINEAFDALKRKTVANPNQRLPKVEILRSAISYIERL). A disordered region spans residues 155–189 (DEQERSQSGASDTRNDKEQNRPSGGDYRWKKASNT).

As to quaternary structure, efficient DNA binding requires dimerization with another bHLH protein.

The protein localises to the nucleus. Functionally, involved in muscle differentiation (myogenic factor). Induces fibroblasts to differentiate into myoblasts. Probable sequence specific DNA-binding protein. This Takifugu rubripes (Japanese pufferfish) protein is Myogenic factor 6 (myf6).